The sequence spans 238 residues: 1-(5-phosphoribosyl)-5-[(5-phosphoribosylamino)methylideneamino] imidazole-4-carboxamide isomerase (238 aa).

The Proton acceptor role is filled by D8. Residue D130 is the Proton donor of the active site.

Belongs to the HisA/HisF family.

It is found in the cytoplasm. It catalyses the reaction 1-(5-phospho-beta-D-ribosyl)-5-[(5-phospho-beta-D-ribosylamino)methylideneamino]imidazole-4-carboxamide = 5-[(5-phospho-1-deoxy-D-ribulos-1-ylimino)methylamino]-1-(5-phospho-beta-D-ribosyl)imidazole-4-carboxamide. The protein operates within amino-acid biosynthesis; L-histidine biosynthesis; L-histidine from 5-phospho-alpha-D-ribose 1-diphosphate: step 4/9. This is 1-(5-phosphoribosyl)-5-[(5-phosphoribosylamino)methylideneamino] imidazole-4-carboxamide isomerase from Methanococcus vannielii (strain ATCC 35089 / DSM 1224 / JCM 13029 / OCM 148 / SB).